A 334-amino-acid polypeptide reads, in one-letter code: Short-chain dehydrogenase/reductase (334 aa).

NADP(+) contacts are provided by Leu44, Lys68, Asp93, Asn120, and Lys152. Active-site proton donor residues include Ser176 and Tyr205. 3 residues coordinate NADP(+): Tyr205, Lys209, and Asn239. The active-site Lowers pKa of active site Tyr is the Lys209.

This sequence belongs to the short-chain dehydrogenases/reductases (SDR) family.

The protein operates within mycotoxin biosynthesis. Its function is as follows. Short-chain dehydrogenase/reductase; part of the 2 gene clusters that mediate the biosynthesis of fusicoccins, diterpene glucosides that display phytohormone-like activity and function as potent activators of plasma membrane H(+)-ATPases in plants by modifying 14-3-3 proteins and cause the plant disease constriction canker. The first step in the pathway is performed by the fusicoccadiene synthase PaFS that possesses both prenyl transferase and terpene cyclase activity, converting isopentenyl diphosphate and dimethylallyl diphosphate into geranylgeranyl diphosphate (GGDP) and successively converting GGDP into fusicocca-2,10(14)-diene, a precursor for fusicoccin H. The second step is the oxidation at the C-8 position by the cytochrome P450 monooxygenase PaP450-2 to yield fusicocca-2,10(14)-diene-8-beta-ol. The cytochrome P450 monooxygenase PaP450-1 then catalyzes the hydroxylation at the C-16 position to produce fusicocca-2,10(14)-diene-8-beta,16-diol. The dioxygenase fc-dox then catalyzes the 16-oxydation of fusicocca-2,10(14)-diene-8-beta,16-diol to yield an aldehyde (8-beta-hydroxyfusicocca-1,10(14)-dien-16-al). The short-chain dehydrogenase/reductase fc-sdr catalyzes the reduction of the aldehyde to yield fusicocca-1,10(14)-diene-8-beta,16-diol. The next step is the hydroxylation at C-9 performed by the cytochrome P450 monooxygenase PaP450-3 that leads to fusicoccin H aglycon which is glycosylated to fusicoccin H by the O-glycosyltransferase PaGT. Hydroxylation at C-12 by the cytochrome P450 monooxygenase PaP450-4 leads then to the production of fusicoccin Q and is followed by methylation by the O-methyltransferase PaMT to yield fusicoccin P. Fusicoccin P is further converted to fusicoccin J via prenylation by the O-glucose prenyltransferase PaPT. Cytochrome P450 monooxygenase PaP450-5 then performs hydroxylation at C-19 to yield dideacetyl-fusicoccin A which is acetylated to 3'-O-deacetyl-fusicoccin A by the O-acetyltransferase PaAT-2. Finally, a another acetylation by the O-acetyltransferase PaAT-1 yields fusicoccin A. This Phomopsis amygdali (Fusicoccum amygdali) protein is Short-chain dehydrogenase/reductase.